A 197-amino-acid polypeptide reads, in one-letter code: Fucoxanthin-chlorophyll a-c binding protein C, chloroplastic (197 aa).

Residues 1-31 (MKTAVIASLIAGAAAFAPAKNAARTSVATNM) constitute a chloroplast transit peptide. A run of 3 helical transmembrane segments spans residues 73–94 (ISML…PGTI), 113–133 (IPAG…SSVM), and 174–196 (GRAA…SLLP).

This sequence belongs to the fucoxanthin chlorophyll protein family. The LHC complex of chromophytic algae is composed of fucoxanthin, chlorophyll A and C bound non-covalently by fucoxanthin chlorophyll proteins (FCPs). The ratio of the pigments in LHC; fucoxanthin: chlorophyll C: chlorophyll A; (0.6-1): (0.1-0.3): (1).

The protein resides in the plastid. The protein localises to the chloroplast thylakoid membrane. The light-harvesting complex (LHC) functions as a light receptor, it captures and delivers excitation energy to photosystems with which it is closely associated. Energy is transferred from the carotenoid and chlorophyll C (or B) to chlorophyll A and the photosynthetic reaction centers where it is used to synthesize ATP and reducing power. The protein is Fucoxanthin-chlorophyll a-c binding protein C, chloroplastic (FCPC) of Phaeodactylum tricornutum (Diatom).